Reading from the N-terminus, the 156-residue chain is Small ribosomal subunit protein uS7 (156 aa).

The protein belongs to the universal ribosomal protein uS7 family. In terms of assembly, part of the 30S ribosomal subunit. Contacts proteins S9 and S11.

One of the primary rRNA binding proteins, it binds directly to 16S rRNA where it nucleates assembly of the head domain of the 30S subunit. Is located at the subunit interface close to the decoding center, probably blocks exit of the E-site tRNA. The polypeptide is Small ribosomal subunit protein uS7 (Leuconostoc mesenteroides subsp. mesenteroides (strain ATCC 8293 / DSM 20343 / BCRC 11652 / CCM 1803 / JCM 6124 / NCDO 523 / NBRC 100496 / NCIMB 8023 / NCTC 12954 / NRRL B-1118 / 37Y)).